We begin with the raw amino-acid sequence, 466 residues long: Gamma-glutamylpolyamine synthetase GlnA3 (466 aa).

Residues 127-466 (GRTVLRRIVA…GVAAAYRWKY (340 aa)) form the GS catalytic domain. Mg(2+)-binding residues include E151 and E153. Residue E202 coordinates ATP. Residues E207 and E214 each coordinate Mg(2+). G259 serves as a coordination point for L-glutamate. Mg(2+) is bound at residue H263. Position 267 (S267) interacts with ATP. L-glutamate contacts are provided by R316 and R334. ATP contacts are provided by R334 and R339. E355 contacts Mg(2+).

It belongs to the glutamine synthetase family. It depends on Mg(2+) as a cofactor. In terms of tissue distribution, expressed in mycelium.

It catalyses the reaction spermine + L-glutamate + ATP = gamma-L-glutamylspermine + ADP + phosphate + H(+). It carries out the reaction spermidine + L-glutamate + ATP = gamma-L-glutamylspermidine + ADP + phosphate + H(+). The enzyme catalyses putrescine + L-glutamate + ATP = gamma-L-glutamylputrescine + ADP + phosphate + H(+). The catalysed reaction is cadaverine + L-glutamate + ATP = gamma-L-glutamylcadaverine + ADP + phosphate + H(+). It participates in amine and polyamine degradation; putrescine degradation. The protein operates within amine and polyamine degradation; spermidine degradation. Its pathway is amine and polyamine degradation; spermine degradation. In terms of biological role, involved in the catabolism of polyamines. Catalyzes the ATP-dependent gamma-glutamylation of polyamines. Substrates include putrescine, cadaverine, spermidine and spermine, with a preference for long-chain polyamines spermidine and spermine. Is not able to compensate for the loss of glutamine synthetases (GSs). No complementation of the L-glutamine auxotrophy of an E.coli glnA mutant. Involved in morphological differentiation and in the production of secondary metabolites. Together with GlnA2, enables survival of S.coelicolor under exposure to high local environmental polyamine concentrations, which is toxic to the cells. In Streptomyces coelicolor (strain ATCC BAA-471 / A3(2) / M145), this protein is Gamma-glutamylpolyamine synthetase GlnA3.